Reading from the N-terminus, the 102-residue chain is uncharacterized protein (102 aa).

This is an uncharacterized protein from Methanothermococcus thermolithotrophicus (Methanococcus thermolithotrophicus).